The sequence spans 427 residues: Serine--tRNA ligase (427 aa).

232 to 234 contacts L-serine; that stretch reads TAE. Residue 263-265 coordinates ATP; sequence RSE. L-serine is bound at residue Glu286. ATP is bound at residue 350–353; sequence EISS. Residue Ser385 coordinates L-serine.

Belongs to the class-II aminoacyl-tRNA synthetase family. Type-1 seryl-tRNA synthetase subfamily. In terms of assembly, homodimer. The tRNA molecule binds across the dimer.

The protein localises to the cytoplasm. The catalysed reaction is tRNA(Ser) + L-serine + ATP = L-seryl-tRNA(Ser) + AMP + diphosphate + H(+). It carries out the reaction tRNA(Sec) + L-serine + ATP = L-seryl-tRNA(Sec) + AMP + diphosphate + H(+). Its pathway is aminoacyl-tRNA biosynthesis; selenocysteinyl-tRNA(Sec) biosynthesis; L-seryl-tRNA(Sec) from L-serine and tRNA(Sec): step 1/1. Its function is as follows. Catalyzes the attachment of serine to tRNA(Ser). Is also able to aminoacylate tRNA(Sec) with serine, to form the misacylated tRNA L-seryl-tRNA(Sec), which will be further converted into selenocysteinyl-tRNA(Sec). This is Serine--tRNA ligase from Lacticaseibacillus paracasei (strain ATCC 334 / BCRC 17002 / CCUG 31169 / CIP 107868 / KCTC 3260 / NRRL B-441) (Lactobacillus paracasei).